The chain runs to 433 residues: MRTKSLKKNKINVITLGCSKNVYDSEVLMGQLKASGKNVVHEEEGNIVVINTCGFIDNAKAESVNTILEYADKKERGLVDKVFVTGCLSERYRPDLEKEIPNVDQYFGTTELPALLKALGADYRHELLGERLTTTPKNYAYLKISEGCDRPCSFCAIPLMRGKNVSQTIEKLVKEAEGLAKNGVKELILIAQDLTYYGLDLYKKRALGELLEALVKIEGIEWIRLHYAFPTGFPMDVLEIMKREPKICNYIDIPLQHISDSILKSMKRGTTREKTTKLLKDFRAAVPGMAIRTTLIVGYPGETEEDFEILKEFVQEMKFDRMGCFAYSHEENTGAYELVDDVPDEVKQARSLEIMDLQSQISWDLNQEKLGQTFRCIIDRKEGGHFVGRTEFDSPDVDNEVLIDATKHYVKTGEFVNIKIIEATEFDLYGEPA.

Residues 9–124 (NKINVITLGC…LLKALGADYR (116 aa)) enclose the MTTase N-terminal domain. [4Fe-4S] cluster contacts are provided by Cys-18, Cys-53, Cys-87, Cys-148, Cys-152, and Cys-155. The 231-residue stretch at 134-364 (TTPKNYAYLK…MDLQSQISWD (231 aa)) folds into the Radical SAM core domain. Positions 367 to 433 (QEKLGQTFRC…TEFDLYGEPA (67 aa)) constitute a TRAM domain.

The protein belongs to the methylthiotransferase family. RimO subfamily. [4Fe-4S] cluster serves as cofactor.

The protein resides in the cytoplasm. It carries out the reaction L-aspartate(89)-[ribosomal protein uS12]-hydrogen + (sulfur carrier)-SH + AH2 + 2 S-adenosyl-L-methionine = 3-methylsulfanyl-L-aspartate(89)-[ribosomal protein uS12]-hydrogen + (sulfur carrier)-H + 5'-deoxyadenosine + L-methionine + A + S-adenosyl-L-homocysteine + 2 H(+). Functionally, catalyzes the methylthiolation of an aspartic acid residue of ribosomal protein uS12. This chain is Ribosomal protein uS12 methylthiotransferase RimO, found in Flavobacterium psychrophilum (strain ATCC 49511 / DSM 21280 / CIP 103535 / JIP02/86).